The following is a 23-amino-acid chain: Conotoxin Tx6.5 (23 aa).

Intrachain disulfides connect cysteine 2–cysteine 10, cysteine 5–cysteine 15, and cysteine 9–cysteine 20. A 4-hydroxyproline; partial modification is found at proline 12.

This sequence belongs to the conotoxin U superfamily. Expressed by the venom duct.

The protein localises to the secreted. The polypeptide is Conotoxin Tx6.5 (Conus textile (Cloth-of-gold cone)).